The sequence spans 418 residues: Serine hydroxymethyltransferase (418 aa).

(6S)-5,6,7,8-tetrahydrofolate-binding positions include leucine 121 and 125–127; that span reads GHL. N6-(pyridoxal phosphate)lysine is present on lysine 230. Residue 355–357 participates in (6S)-5,6,7,8-tetrahydrofolate binding; it reads SPF.

The protein belongs to the SHMT family. Homodimer. Pyridoxal 5'-phosphate is required as a cofactor.

Its subcellular location is the cytoplasm. It carries out the reaction (6R)-5,10-methylene-5,6,7,8-tetrahydrofolate + glycine + H2O = (6S)-5,6,7,8-tetrahydrofolate + L-serine. Its pathway is one-carbon metabolism; tetrahydrofolate interconversion. It functions in the pathway amino-acid biosynthesis; glycine biosynthesis; glycine from L-serine: step 1/1. Catalyzes the reversible interconversion of serine and glycine with tetrahydrofolate (THF) serving as the one-carbon carrier. This reaction serves as the major source of one-carbon groups required for the biosynthesis of purines, thymidylate, methionine, and other important biomolecules. Also exhibits THF-independent aldolase activity toward beta-hydroxyamino acids, producing glycine and aldehydes, via a retro-aldol mechanism. The polypeptide is Serine hydroxymethyltransferase (Streptococcus pneumoniae (strain P1031)).